A 733-amino-acid polypeptide reads, in one-letter code: Hypermethylated in cancer 1 protein (733 aa).

The BTB domain maps to 47–110 (CDVIIVVQNA…IYTGRLADGA (64 aa)). The segment at 154–315 (KYCHLRGGGG…PFRGGSGSPG (162 aa)) is mediates HDAC-dependent transcriptional repression. Position 159 is an omega-N-methylarginine (R159). Residues 189-209 (YPSPVGPPPPPAAEPPSGPEA) are disordered. Pro residues predominate over residues 192–206 (PVGPPPPPAAEPPSG). S237 carries the post-translational modification Phosphoserine. Residues 241–247 (GLDLSKK) are interaction with CTBP1. The segment at 241 to 421 (GLDLSKKSPP…PGGHLEGYPC (181 aa)) is disordered. At S248 the chain carries Phosphoserine. Residues 284-293 (LALPSLPPLP) are compositionally biased toward pro residues. K333 carries the N6-acetyllysine; alternate modification. A Glycyl lysine isopeptide (Lys-Gly) (interchain with G-Cter in SUMO); alternate cross-link involves residue K333. Residues 344–361 (ELGRERGSPSERCEERGG) are compositionally biased toward basic and acidic residues. A Phosphoserine modification is found at S366. Pro residues predominate over residues 368-380 (GGPPLGLAPPPRY). 5 C2H2-type zinc fingers span residues 439-459 (CIPCGKGFPSSEQLNAHVEAH), 509-529 (CASCDKSYKDPATLRQHEKTH), 537-557 (CTICGKKFTQRGTMTRHMRSH), 565-585 (CDACGMRFTRQYRLTEHMRIH), and 593-613 (CQVCGGKFAQQRNLISHMKMH). S704 carries the post-translational modification Phosphoserine.

Belongs to the krueppel C2H2-type zinc-finger protein family. Hic subfamily. As to quaternary structure, self-associates. Interacts with HIC2. Interacts with CTBP1 and CTBP2. Interacts with TCF7L2 and ARID1A. Interacts with MTA1 and MBD3; indicative for an association with the NuRD complex. Interacts with SIRT1. Post-translationally, acetylated on several residues, including Lys-333. Lys-333 is deacetylated by SIRT1. In terms of processing, sumoylated on Lys-333 by a PIAS family member, which enhances interaction with MTA1, positively regulates transcriptional repression activity and is enhanced by HDAC4. Ubiquitously expressed with highest levels found in lung, colon, prostate, thymus, testis and ovary. Expression is absent or decreased in many tumor cells.

The protein resides in the nucleus. Functionally, transcriptional repressor. Recognizes and binds to the consensus sequence '5-[CG]NG[CG]GGGCA[CA]CC-3'. May act as a tumor suppressor. Involved in development of head, face, limbs and ventral body wall. Involved in down-regulation of SIRT1 and thereby is involved in regulation of p53/TP53-dependent apoptotic DNA-damage responses. The specific target gene promoter association seems to be depend on corepressors, such as CTBP1 or CTBP2 and MTA1. In cooperation with MTA1 (indicative for an association with the NuRD complex) represses transcription from CCND1/cyclin-D1 and CDKN1C/p57Kip2 specifically in quiescent cells. Involved in regulation of the Wnt signaling pathway probably by association with TCF7L2 and preventing TCF7L2 and CTNNB1 association with promoters of TCF-responsive genes. Seems to repress transcription from E2F1 and ATOH1 which involves ARID1A, indicative for the participation of a distinct SWI/SNF-type chromatin-remodeling complex. Probably represses transcription of ACKR3, FGFBP1 and EFNA1. The polypeptide is Hypermethylated in cancer 1 protein (HIC1) (Homo sapiens (Human)).